A 156-amino-acid polypeptide reads, in one-letter code: Putative pre-16S rRNA nuclease (156 aa).

The protein belongs to the YqgF nuclease family.

Its subcellular location is the cytoplasm. In terms of biological role, could be a nuclease involved in processing of the 5'-end of pre-16S rRNA. The polypeptide is Putative pre-16S rRNA nuclease (Nocardioides sp. (strain ATCC BAA-499 / JS614)).